Here is a 143-residue protein sequence, read N- to C-terminus: Large ribosomal subunit protein uL15 (143 aa).

2 stretches are compositionally biased toward basic residues: residues 1–13 (MIRK…KQRG) and 23–38 (KKHR…GNAG). The tract at residues 1–38 (MIRKSKKITKQRGSRTCGYGEAKKHRGAGHRGGRGNAG) is disordered.

The protein belongs to the universal ribosomal protein uL15 family. Part of the 50S ribosomal subunit.

Its function is as follows. Binds to the 23S rRNA. The polypeptide is Large ribosomal subunit protein uL15 (Methanococcus vannielii).